An 878-amino-acid chain; its full sequence is Interleukin-3 receptor class 2 subunit beta (878 aa).

Positions 1–22 (MDQQMALTWGLCYMALVALCWG) are cleaved as a signal peptide. The Extracellular portion of the chain corresponds to 23–440 (HEVTEEEETV…SNEYTWTTDW (418 aa)). Cys-39 and Cys-49 form a disulfide bridge. A glycan (N-linked (GlcNAc...) asparagine) is linked at Asn-62. A disulfide bond links Cys-78 and Cys-95. The Fibronectin type-III 1 domain maps to 139-244 (PPKDIHISPS…PEVHWDSQPG (106 aa)). Residues 223 to 244 (GSSLSGRPSRWSPEVHWDSQPG) form a disordered region. Disulfide bonds link Cys-254–Cys-264 and Cys-293–Cys-310. Positions 343–438 (QMEPPILNQT…EWSNEYTWTT (96 aa)) constitute a Fibronectin type-III 2 domain. N-linked (GlcNAc...) asparagine glycosylation is present at Asn-350. Positions 427–431 (WSEWS) match the WSXWS motif motif. The helical transmembrane segment at 441 to 462 (VMPTLWIVLILVFLIFTLLLAL) threads the bilayer. Residues 463–878 (HFGRVYGYRT…AIQFFKSLKY (416 aa)) are Cytoplasmic-facing. The Box 1 motif signature appears at 476 to 484 (WKEKIPNPS). Disordered regions lie at residues 539-620 (LTIE…GGSL) and 660-709 (SSLE…MASD). Residues 554-570 (PDTTPAASSESTEQLPN) are compositionally biased toward polar residues. The segment covering 671-689 (EPKENPPVELSVEKQEARD) has biased composition (basic and acidic residues). 2 positions are modified to phosphoserine: Ser-752 and Ser-754. Phosphotyrosine is present on Tyr-765. Disordered regions lie at residues 771-810 (SVSQ…PHPE) and 829-849 (PGSL…ETED).

Belongs to the type I cytokine receptor family. Type 4 subfamily. As to quaternary structure, heterodimer of an alpha and a beta subunit.

The protein localises to the membrane. Its function is as follows. In mouse, there are two classes of high-affinity IL3 receptors. One contains this IL3-specific beta subunit and the other contains the beta subunit also shared by high-affinity IL5 and GM-CSF receptors. This chain is Interleukin-3 receptor class 2 subunit beta (Csf2rb2), found in Mus musculus (Mouse).